We begin with the raw amino-acid sequence, 791 residues long: ABC multidrug transporter mdr2 (791 aa).

A glycan (N-linked (GlcNAc...) asparagine) is linked at Asn147. 2 helical membrane passes run 182–202 (ALAF…PFSI) and 220–240 (LFGL…TLGA). Residues 182–471 (ALAFLFLLVS…LSSFYSELMK (290 aa)) enclose the ABC transmembrane type-1 domain. N-linked (GlcNAc...) asparagine glycosylation is present at Asn303. Transmembrane regions (helical) follow at residues 307–324 (GLRA…MAYV) and 326–346 (LKLS…AFFY). N-linked (GlcNAc...) asparagine glycans are attached at residues Asn352 and Asn421. 2 consecutive transmembrane segments (helical) span residues 422–442 (MTIL…AITI) and 445–465 (LTSF…LSSF). The ABC transporter domain occupies 504–741 (IRFENVTFSY…PDGAFTKLME (238 aa)). Asn508 carries N-linked (GlcNAc...) asparagine glycosylation. 539-546 (GPSGGGKS) contributes to the ATP binding site. Asn692 is a glycosylation site (N-linked (GlcNAc...) asparagine). The span at 754–769 (ANTPANPVAQETSWDL) shows a compositional bias: polar residues. Residues 754 to 791 (ANTPANPVAQETSWDLQSDDGTEISEDTNIPSEPRTID) are disordered. Residues 770 to 779 (QSDDGTEISE) are compositionally biased toward acidic residues.

Belongs to the ABC transporter superfamily. ABCB family. Mitochondrial peptide exporter (TC 3.A.1.212) subfamily.

The protein localises to the cell membrane. In terms of biological role, pleiotropic ABC efflux transporter that may be involved in A.fumigatus adaptation to azoles. This chain is ABC multidrug transporter mdr2, found in Aspergillus fumigatus (strain ATCC MYA-4609 / CBS 101355 / FGSC A1100 / Af293) (Neosartorya fumigata).